The sequence spans 102 residues: Small ribosomal subunit protein eS24 (102 aa).

Belongs to the eukaryotic ribosomal protein eS24 family.

The protein is Small ribosomal subunit protein eS24 of Methanococcus aeolicus (strain ATCC BAA-1280 / DSM 17508 / OCM 812 / Nankai-3).